Reading from the N-terminus, the 405-residue chain is Phosphatidylinositol 5-phosphate 4-kinase type-2 alpha (405 aa).

Position 2 is an N-acetylalanine (Ala-2). Residue Thr-3 is modified to Phosphothreonine. Ser-14 is subject to Phosphoserine. The region spanning 33 to 405 (ASDPLLSVLM…RFLDFIGHIL (373 aa)) is the PIPK domain. Residues 59 to 65 (VMLMPDD) form a required for interaction with PIP5K1A region. Residues Lys-89 and Lys-145 each carry the N6-acetyllysine modification. The segment at 288 to 328 (QEEVECEENDGEEEGESDSTHPIGTPPDSPGNTLNSSPPLA) is disordered. The span at 289-304 (EEVECEENDGEEEGES) shows a compositional bias: acidic residues.

As to quaternary structure, homodimer. Interacts with PIP4K2B; the interaction may regulate localization to the nucleus. Probably interacts with PIP5K1A; the interaction inhibits PIP5K1A kinase activity. Phosphorylated in tyrosines. Phosphorylation is induced by light and increases kinase activity. As to expression, detected in rod photoreceptor cells.

The protein resides in the cell membrane. The protein localises to the nucleus. It is found in the lysosome. Its subcellular location is the cytoplasm. It localises to the photoreceptor inner segment. The protein resides in the cell projection. The protein localises to the cilium. It is found in the photoreceptor outer segment. The catalysed reaction is a 1,2-diacyl-sn-glycero-3-phospho-(1D-myo-inositol-5-phosphate) + ATP = a 1,2-diacyl-sn-glycero-3-phospho-(1D-myo-inositol-4,5-bisphosphate) + ADP + H(+). It catalyses the reaction 1,2-dihexadecanoyl-sn-glycero-3-phospho-(1D-myo-inositol-5-phosphate) + ATP = 1,2-dihexadecanoyl-sn-glycero-3-phospho-(1D-myo-inositol-4,5-bisphosphate) + ADP + H(+). It carries out the reaction 1,2-dihexadecanoyl-sn-glycero-3-phospho-(1D-myo-inositol-5-phosphate) + GTP = 1,2-dihexadecanoyl-sn-glycero-3-phospho-(1D-myo-inositol-4,5-bisphosphate) + GDP + H(+). Its activity is regulated as follows. In rod outer segments, activated by light. Its function is as follows. Catalyzes the phosphorylation of phosphatidylinositol 5-phosphate (PtdIns5P) on the fourth hydroxyl of the myo-inositol ring, to form phosphatidylinositol 4,5-bisphosphate (PtdIns(4,5)P2). Has both ATP- and GTP-dependent kinase activities. May exert its function by regulating the levels of PtdIns5P, which functions in the cytosol by increasing AKT activity and in the nucleus signals through ING2. May regulate the pool of cytosolic PtdIns5P in response to the activation of tyrosine phosphorylation. Required for lysosome-peroxisome membrane contacts and intracellular cholesterol transport through modulating peroxisomal PtdIns(4,5)P2 level. In collaboration with PIP4K2B, has a role in mediating autophagy in times of nutrient stress. Required for autophagosome-lysosome fusion and the regulation of cellular lipid metabolism. Negatively regulates insulin signaling through a catalytic-independent mechanism. PIP4Ks interact with PIP5Ks and suppress PIP5K-mediated PtdIns(4,5)P2 synthesis and insulin-dependent conversion to PtdIns(3,4,5)P3. May be involved in thrombopoiesis, and the terminal maturation of megakaryocytes and regulation of their size. In Mus musculus (Mouse), this protein is Phosphatidylinositol 5-phosphate 4-kinase type-2 alpha.